The primary structure comprises 266 residues: Large ribosomal subunit protein eL8 (266 aa).

Glycyl lysine isopeptide (Lys-Gly) (interchain with G-Cter in SUMO2) cross-links involve residues Lys11, Lys20, and Lys21. Residue Lys34 is modified to N6-acetyllysine. Lys48 participates in a covalent cross-link: Glycyl lysine isopeptide (Lys-Gly) (interchain with G-Cter in SUMO2). Lys97 is modified (N6-acetyllysine; alternate). Lys97 participates in a covalent cross-link: Glycyl lysine isopeptide (Lys-Gly) (interchain with G-Cter in SUMO2); alternate. A Glycyl lysine isopeptide (Lys-Gly) (interchain with G-Cter in SUMO2) cross-link involves residue Lys125. Lys217 carries the N6-acetyllysine modification. Lys245 participates in a covalent cross-link: Glycyl lysine isopeptide (Lys-Gly) (interchain with G-Cter in SUMO2).

It belongs to the eukaryotic ribosomal protein eL8 family. As to quaternary structure, component of the large ribosomal subunit. Interacts with CRY1. Interacts with DICER1, AGO2, TARBP2, MOV10 and EIF6; they form a large RNA-induced silencing complex (RISC).

Its subcellular location is the cytoplasm. Component of the large ribosomal subunit. The ribosome is a large ribonucleoprotein complex responsible for the synthesis of proteins in the cell. The chain is Large ribosomal subunit protein eL8 (RPL7A) from Bos taurus (Bovine).